The chain runs to 481 residues: uncharacterized protein (481 aa).

Transmembrane regions (helical) follow at residues 3–23 (YLPM…LLHG), 33–53 (FITA…YYYF), 75–95 (QAII…GMGE), 99–119 (NNMF…IVLA), 122–142 (IFNL…LVFL), 155–175 (YMIM…FLLA), 196–216 (IYGG…LPPF), 241–261 (FVLV…DYFA), 264–284 (HAVL…MALL), 303–323 (VATG…FHAI), 351–371 (GGLL…KLAI), 400–420 (IIMI…FYLI), and 443–463 (VFSL…PDIV).

The protein localises to the cell membrane. This is an uncharacterized protein from Methanocaldococcus jannaschii (strain ATCC 43067 / DSM 2661 / JAL-1 / JCM 10045 / NBRC 100440) (Methanococcus jannaschii).